The primary structure comprises 294 residues: Phosphoribosylaminoimidazole-succinocarboxamide synthase (294 aa).

Belongs to the SAICAR synthetase family.

The catalysed reaction is 5-amino-1-(5-phospho-D-ribosyl)imidazole-4-carboxylate + L-aspartate + ATP = (2S)-2-[5-amino-1-(5-phospho-beta-D-ribosyl)imidazole-4-carboxamido]succinate + ADP + phosphate + 2 H(+). Its pathway is purine metabolism; IMP biosynthesis via de novo pathway; 5-amino-1-(5-phospho-D-ribosyl)imidazole-4-carboxamide from 5-amino-1-(5-phospho-D-ribosyl)imidazole-4-carboxylate: step 1/2. The sequence is that of Phosphoribosylaminoimidazole-succinocarboxamide synthase from Thermoplasma volcanium (strain ATCC 51530 / DSM 4299 / JCM 9571 / NBRC 15438 / GSS1).